The primary structure comprises 127 residues: Promotilin (127 aa).

A signal peptide spans 1-25; the sequence is MLSRKAVAALLLVHVTAMLASQTEG. A disordered region spans residues 41–67; the sequence is REQNKRLRKSLRVQQRSKAAGRLEPQE.

It belongs to the motilin family. Present in the gut mucosa with the exception of the gastric corpus. Also present in medulla oblongata, nucleus of the solitary tract, hypophysis, spinal cord, hypothalamus, and cerebellum but not in the cerebral cortex.

It is found in the secreted. Its function is as follows. Plays an important role in the regulation of interdigestive gastrointestinal motility and indirectly causes rhythmic contraction of duodenal and colonic smooth muscle. The sequence is that of Promotilin (MLN) from Cavia porcellus (Guinea pig).